The chain runs to 574 residues: Potassium-transporting ATPase potassium-binding subunit (574 aa).

The next 10 helical transmembrane spans lie at 7 to 27 (IELGLFIALLAVLNIPLGTHL), 65 to 85 (IEYAVGLLCFNFVGILVSYLI), 136 to 156 (FGLAVPNFTSAATGIAAAAAL), 175 to 195 (LIRIHYYLLLPLSLFIAIILL), 264 to 284 (FVEMLSIFLIPSALTYYFGLS), 292 to 312 (WSIWLTMTFCFLILTLSCFIF), 390 to 410 (GLYGILLFVILSVFLFGLMIG), 427 to 447 (MAVLALMIQYVLILGLSALAL), 494 to 514 (LLLGVAMFLGRYFVLIPILAI), and 534 to 554 (GWLFIFVLGATIFLLAALNFF).

The protein belongs to the KdpA family. The system is composed of three essential subunits: KdpA, KdpB and KdpC.

Its subcellular location is the cell inner membrane. Part of the high-affinity ATP-driven potassium transport (or Kdp) system, which catalyzes the hydrolysis of ATP coupled with the electrogenic transport of potassium into the cytoplasm. This subunit binds the periplasmic potassium ions and delivers the ions to the membrane domain of KdpB through an intramembrane tunnel. The polypeptide is Potassium-transporting ATPase potassium-binding subunit (Methylacidiphilum infernorum (isolate V4) (Methylokorus infernorum (strain V4))).